Here is a 442-residue protein sequence, read N- to C-terminus: Elongation factor 1-alpha (442 aa).

The region spanning 5–228 is the tr-type G domain; the sequence is KTHINIVVIG…DSVTPPERPV (224 aa). Residues 14–21 are G1; the sequence is GHVDSGKS. 14–21 lines the GTP pocket; sequence GHVDSGKS. Residues 70–74 are G2; that stretch reads GITID. Residues 91 to 94 form a G3 region; that stretch reads DAPG. Residues 91–95 and 153–156 contribute to the GTP site; these read DAPGH and NKMD. Residues 153–156 form a G4 region; that stretch reads NKMD. The interval 192-194 is G5; sequence SGF.

The protein belongs to the TRAFAC class translation factor GTPase superfamily. Classic translation factor GTPase family. EF-Tu/EF-1A subfamily.

It localises to the cytoplasm. In terms of biological role, this protein promotes the GTP-dependent binding of aminoacyl-tRNA to the A-site of ribosomes during protein biosynthesis. In Entamoeba histolytica (strain ATCC 30459 / HM-1:IMSS / ABRM), this protein is Elongation factor 1-alpha.